A 317-amino-acid polypeptide reads, in one-letter code: L-lactate dehydrogenase (317 aa).

Residues V18, D39, K44, Y69, and 83-84 (GA) contribute to the NAD(+) site. Residues Q86, R92, and 124–127 (NPVD) each bind substrate. NAD(+)-binding positions include 122-124 (VTN) and S147. Residue 152-155 (DTAR) coordinates substrate. Beta-D-fructose 1,6-bisphosphate-binding residues include R157 and H172. The active-site Proton acceptor is the H179. Y225 bears the Phosphotyrosine mark. T234 provides a ligand contact to substrate.

The protein belongs to the LDH/MDH superfamily. LDH family. Homotetramer.

It is found in the cytoplasm. The catalysed reaction is (S)-lactate + NAD(+) = pyruvate + NADH + H(+). It functions in the pathway fermentation; pyruvate fermentation to lactate; (S)-lactate from pyruvate: step 1/1. Its activity is regulated as follows. Allosterically activated by fructose 1,6-bisphosphate (FBP). Its function is as follows. Catalyzes the conversion of lactate to pyruvate. The protein is L-lactate dehydrogenase of Acetivibrio thermocellus (strain ATCC 27405 / DSM 1237 / JCM 9322 / NBRC 103400 / NCIMB 10682 / NRRL B-4536 / VPI 7372) (Clostridium thermocellum).